Consider the following 489-residue polypeptide: Ribonuclease G (489 aa).

In terms of domain architecture, S1 motif spans 39-128; that stretch reads GNIYKGRVSR…LTTDITLPSR (90 aa). Mg(2+) contacts are provided by Asp-304 and Asp-347.

It belongs to the RNase E/G family. RNase G subfamily. As to quaternary structure, homodimer, and possible higher multimers. It depends on Mg(2+) as a cofactor.

It is found in the cytoplasm. In terms of biological role, acts in the processing of the 5'-end of precursors of 16S rRNA. Confers adaptive resistance to aminoglycoside antibiotics through modulation of 16S rRNA processing. An endoribonuclease, it prefers 5'-monophosphorylated substrates and cleaves single-stranded sites rich in A and U residues; also contributes to 23S rRNA processing, tRNA processing and mRNA turnover. Involved in decay of speF mRNA, has a preference for adenine nucleotides. The polypeptide is Ribonuclease G (Salmonella typhimurium (strain SL1344)).